Here is a 377-residue protein sequence, read N- to C-terminus: Putative efflux system component YknX (377 aa).

A helical transmembrane segment spans residues 3–23 (KVWIGIGIAVIVALFVGINIY). Residues 95–187 (TNEQLSLEKE…RVSDLEVKSE (93 aa)) are a coiled coil.

This sequence belongs to the membrane fusion protein (MFP) (TC 8.A.1) family. Part of a complex composed of YknX, YknY and YknZ. The complex interacts with YknW.

The protein localises to the cell membrane. Its function is as follows. Part of an unusual four-component transporter, which is required for protection against the killing factor SdpC (sporulation-delaying protein). This Bacillus subtilis (strain 168) protein is Putative efflux system component YknX (yknX).